Reading from the N-terminus, the 626-residue chain is Chaperone protein HtpG (626 aa).

The a; substrate-binding stretch occupies residues 1-341 (MIKKEFKAES…SEDLSLNISR (341 aa)). The tract at residues 342 to 552 (EMLQHDRQLK…DGDVTIEMEK (211 aa)) is b. A c region spans residues 553–626 (ILSAMPNNQE…FTNDICKLMS (74 aa)).

The protein belongs to the heat shock protein 90 family. In terms of assembly, homodimer.

Its subcellular location is the cytoplasm. Molecular chaperone. Has ATPase activity. The sequence is that of Chaperone protein HtpG from Alkaliphilus metalliredigens (strain QYMF).